The primary structure comprises 98 residues: Tan_12Cys (98 aa).

The first 21 residues, 1-21 (MNLKVLFLLAMVLVTLCLGED), serve as a signal peptide directing secretion. A propeptide spanning residues 22–28 (RVTDRRK) is cleaved from the precursor.

The protein belongs to the teretoxin C (TC) superfamily. In terms of processing, contains 6 disulfide bonds. Expressed by the venom duct.

The protein localises to the secreted. The sequence is that of Tan_12Cys from Terebra anilis (Auger snail).